The sequence spans 352 residues: tRNA(Ile)-lysidine synthase (352 aa).

58–63 serves as a coordination point for ATP; that stretch reads SGGADS.

It belongs to the tRNA(Ile)-lysidine synthase family.

The protein localises to the cytoplasm. The enzyme catalyses cytidine(34) in tRNA(Ile2) + L-lysine + ATP = lysidine(34) in tRNA(Ile2) + AMP + diphosphate + H(+). Ligates lysine onto the cytidine present at position 34 of the AUA codon-specific tRNA(Ile) that contains the anticodon CAU, in an ATP-dependent manner. Cytidine is converted to lysidine, thus changing the amino acid specificity of the tRNA from methionine to isoleucine. This is tRNA(Ile)-lysidine synthase from Streptomyces coelicolor (strain ATCC BAA-471 / A3(2) / M145).